The chain runs to 337 residues: Pantothenate synthetase (337 aa).

31–38 (MGALHEGH) is an ATP binding site. The Proton donor role is filled by H38. Q65 is a (R)-pantoate binding site. Beta-alanine is bound at residue Q65. ATP is bound at residue 152–155 (GQKD). Q158 is a binding site for (R)-pantoate. Residues V181 and 189–192 (LSSR) each bind ATP.

The protein belongs to the pantothenate synthetase family. Homodimer.

Its subcellular location is the cytoplasm. The catalysed reaction is (R)-pantoate + beta-alanine + ATP = (R)-pantothenate + AMP + diphosphate + H(+). It functions in the pathway cofactor biosynthesis; (R)-pantothenate biosynthesis; (R)-pantothenate from (R)-pantoate and beta-alanine: step 1/1. In terms of biological role, catalyzes the condensation of pantoate with beta-alanine in an ATP-dependent reaction via a pantoyl-adenylate intermediate. This Streptomyces coelicolor (strain ATCC BAA-471 / A3(2) / M145) protein is Pantothenate synthetase.